Consider the following 344-residue polypeptide: Heat-inducible transcription repressor HrcA (344 aa).

It belongs to the HrcA family.

Its function is as follows. Negative regulator of class I heat shock genes (grpE-dnaK-dnaJ and groELS operons). Prevents heat-shock induction of these operons. The sequence is that of Heat-inducible transcription repressor HrcA from Geobacillus stearothermophilus (Bacillus stearothermophilus).